Here is a 278-residue protein sequence, read N- to C-terminus: TATA box-binding protein-associated factor RNA polymerase I subunit D (278 aa).

2 disordered regions span residues 20–71 (ANRS…SSFE) and 88–116 (KKRY…RNPI). Residues 22–33 (RSDNSSDSSLFK) show a composition bias toward polar residues. Phosphoserine is present on Ser23. Residues 88 to 99 (KKRYKKKKKRRY) show a composition bias toward basic residues. 2 positions are modified to phosphoserine: Ser138 and Ser234.

Component of the transcription factor SL1/TIF-IB complex, composed of TBP and at least TAF1A, TAF1B, TAF1C and TAF1D. Interacts with UBTF.

Its subcellular location is the nucleus. Component of the transcription factor SL1/TIF-IB complex, which is involved in the assembly of the PIC (preinitiation complex) during RNA polymerase I-dependent transcription. The rate of PIC formation probably is primarily dependent on the rate of association of SL1/TIF-IB with the rDNA promoter. SL1/TIF-IB is involved in stabilization of nucleolar transcription factor 1/UBTF on rDNA. Formation of SL1/TIF-IB excludes the association of TBP with TFIID subunits. The polypeptide is TATA box-binding protein-associated factor RNA polymerase I subunit D (TAF1D) (Homo sapiens (Human)).